We begin with the raw amino-acid sequence, 351 residues long: Protein FAM118B (351 aa).

Residue A2 is modified to N-acetylalanine. A Phosphoserine modification is found at S9.

The protein belongs to the FAM118 family.

Its subcellular location is the nucleus. The protein localises to the cajal body. Its function is as follows. May play a role in Cajal bodies formation. This is Protein FAM118B (FAM118B) from Bos taurus (Bovine).